The chain runs to 502 residues: Maturase K (502 aa).

The protein belongs to the intron maturase 2 family. MatK subfamily.

It is found in the plastid. The protein resides in the chloroplast. Its function is as follows. Usually encoded in the trnK tRNA gene intron. Probably assists in splicing its own and other chloroplast group II introns. The polypeptide is Maturase K (Cephalotaxus fortunei (Chinese plum-yew)).